Here is a 154-residue protein sequence, read N- to C-terminus: 6,7-dimethyl-8-ribityllumazine synthase (154 aa).

Residues F22, A56 to E58, and A80 to I82 contribute to the 5-amino-6-(D-ribitylamino)uracil site. A85–T86 is a binding site for (2S)-2-hydroxy-3-oxobutyl phosphate. Residue H88 is the Proton donor of the active site. F113 provides a ligand contact to 5-amino-6-(D-ribitylamino)uracil. R127 contacts (2S)-2-hydroxy-3-oxobutyl phosphate.

This sequence belongs to the DMRL synthase family. As to quaternary structure, forms an icosahedral capsid composed of 60 subunits, arranged as a dodecamer of pentamers.

It carries out the reaction (2S)-2-hydroxy-3-oxobutyl phosphate + 5-amino-6-(D-ribitylamino)uracil = 6,7-dimethyl-8-(1-D-ribityl)lumazine + phosphate + 2 H2O + H(+). It participates in cofactor biosynthesis; riboflavin biosynthesis; riboflavin from 2-hydroxy-3-oxobutyl phosphate and 5-amino-6-(D-ribitylamino)uracil: step 1/2. Functionally, catalyzes the formation of 6,7-dimethyl-8-ribityllumazine by condensation of 5-amino-6-(D-ribitylamino)uracil with 3,4-dihydroxy-2-butanone 4-phosphate. This is the penultimate step in the biosynthesis of riboflavin. The protein is 6,7-dimethyl-8-ribityllumazine synthase of Geobacillus sp. (strain WCH70).